The chain runs to 165 residues: Phosphopantetheine adenylyltransferase (165 aa).

Threonine 9 is a binding site for substrate. Residues 9 to 10 and histidine 17 contribute to the ATP site; that span reads TF. Residues lysine 41, leucine 78, and arginine 92 each coordinate substrate. Residues 93–95, glutamate 103, and 128–134 each bind ATP; these read GLR and HQAIASK.

The protein belongs to the bacterial CoaD family. In terms of assembly, homohexamer. It depends on Mg(2+) as a cofactor.

The protein resides in the cytoplasm. It catalyses the reaction (R)-4'-phosphopantetheine + ATP + H(+) = 3'-dephospho-CoA + diphosphate. The protein operates within cofactor biosynthesis; coenzyme A biosynthesis; CoA from (R)-pantothenate: step 4/5. In terms of biological role, reversibly transfers an adenylyl group from ATP to 4'-phosphopantetheine, yielding dephospho-CoA (dPCoA) and pyrophosphate. This chain is Phosphopantetheine adenylyltransferase, found in Ruegeria sp. (strain TM1040) (Silicibacter sp.).